A 119-amino-acid chain; its full sequence is Large ribosomal subunit protein uL18 (119 aa).

It belongs to the universal ribosomal protein uL18 family. In terms of assembly, part of the 50S ribosomal subunit; part of the 5S rRNA/L5/L18/L25 subcomplex. Contacts the 5S and 23S rRNAs.

Its function is as follows. This is one of the proteins that bind and probably mediate the attachment of the 5S RNA into the large ribosomal subunit, where it forms part of the central protuberance. This is Large ribosomal subunit protein uL18 from Ruegeria pomeroyi (strain ATCC 700808 / DSM 15171 / DSS-3) (Silicibacter pomeroyi).